Consider the following 329-residue polypeptide: MQFIDQARITVKAGRGGDGIVAFRREKYVPAGGPSGGDGGNGGNVVFQADSNLQTLLDFKFKQIILAENGRRGGPNKCTGASGNNIVLKVPCGTEVRHLETGIIFGDLTIDGESLVVAFGGIGGLGNAHYLSNRNRAPEKFTEGKDGEEWLLHLELKLLAEVGIIGLPNAGKSTLISVLSSARPKIADYPFTTLIPNLGVVRKPSGDGTVFADIPGLIEGAAEGIGLGHEFLRHIERTRLLIHLVDASALNPLEDIEIVENELSAYGHSLIDRPRILVLNKKELLDAKNLKKLERKLNQGSISEVISISAIMSNGLDILLNKIWSKLEI.

Positions 1–159 (MQFIDQARIT…WLLHLELKLL (159 aa)) constitute an Obg domain. The OBG-type G domain occupies 160–328 (AEVGIIGLPN…LLNKIWSKLE (169 aa)). Residues 166-173 (GLPNAGKS), 191-195 (FTTLI), 213-216 (DIPG), 280-283 (NKKE), and 309-311 (SAI) contribute to the ATP site. 2 residues coordinate Mg(2+): serine 173 and threonine 193.

Belongs to the TRAFAC class OBG-HflX-like GTPase superfamily. OBG GTPase family. As to quaternary structure, monomer. Requires Mg(2+) as cofactor.

Its subcellular location is the cytoplasm. An essential GTPase which binds GTP, GDP and possibly (p)ppGpp with moderate affinity, with high nucleotide exchange rates and a fairly low GTP hydrolysis rate. Plays a role in control of the cell cycle, stress response, ribosome biogenesis and in those bacteria that undergo differentiation, in morphogenesis control. The protein is GTPase Obg of Prochlorococcus marinus (strain SARG / CCMP1375 / SS120).